The sequence spans 266 residues: Transmembrane protein 192 (266 aa).

At 1–46 the chain is on the cytoplasmic side; it reads MAAAGRLEDSSLDILQSMDDDPLLDTQPLPHHSLQAQFRPRFHPLP. Serine 17 carries the phosphoserine modification. Residues 47–67 traverse the membrane as a helical segment; that stretch reads TVIIANLLLLIHVVFVVLAFL. Residues 68–89 are Lumenal-facing; it reads TGVPCLYPNPTEDKCPENYTSP. The helical transmembrane segment at 90–110 threads the bilayer; sequence LKVQTAIILGKLILWILHLLF. Over 111-137 the chain is Cytoplasmic; that stretch reads ERYVQYHHRKVRSRGYSQIYRSTRHLK. Residues 138-158 form a helical membrane-spanning segment; the sequence is TLALTIHSSGNTALLLLLCVQ. Topologically, residues 159 to 171 are lumenal; that stretch reads HSFPEPSKLYLEL. The chain crosses the membrane as a helical span at residues 172-192; sequence ILAVLALELICSLSCLILYIV. Over 193–266 the chain is Cytoplasmic; sequence KIRRFNRAKP…LELATQPART (74 aa). A Phosphotyrosine modification is found at tyrosine 213. Phosphoserine occurs at positions 229 and 230.

It belongs to the TMEM192 family. Homodimer.

The protein resides in the lysosome membrane. It localises to the late endosome. The polypeptide is Transmembrane protein 192 (Tmem192) (Mus musculus (Mouse)).